We begin with the raw amino-acid sequence, 603 residues long: Threonine--tRNA ligase (603 aa).

Residues 209–500 (DHRKLGNEMK…LIEHCAGELP (292 aa)) form a catalytic region. Residues C301, H352, and H477 each coordinate Zn(2+).

This sequence belongs to the class-II aminoacyl-tRNA synthetase family. In terms of assembly, homodimer. The cofactor is Zn(2+).

The protein localises to the cytoplasm. It catalyses the reaction tRNA(Thr) + L-threonine + ATP = L-threonyl-tRNA(Thr) + AMP + diphosphate + H(+). Functionally, catalyzes the attachment of threonine to tRNA(Thr) in a two-step reaction: L-threonine is first activated by ATP to form Thr-AMP and then transferred to the acceptor end of tRNA(Thr). Also edits incorrectly charged L-seryl-tRNA(Thr). This is Threonine--tRNA ligase from Campylobacter lari (strain RM2100 / D67 / ATCC BAA-1060).